The sequence spans 304 residues: Protein PagO (304 aa).

The next 10 membrane-spanning stretches (helical) occupy residues 4–24 (VSIS…WLAM), 34–54 (VFAT…IAWL), 67–87 (LFQF…MIYG), 95–115 (LAAI…VLFL), 119–139 (AKLM…GILL), 150–170 (WQGI…YTQC), 180–200 (ITFN…TGWF), 214–234 (ILAT…CYFA), 246–266 (LVFL…YGYA), and 267–287 (ISTH…LTLV). EamA domains are found at residues 15-139 (LTWG…GILL) and 161-287 (LIHA…LTLV).

Belongs to the EamA transporter family.

It localises to the cell membrane. The chain is Protein PagO (pagO) from Salmonella typhimurium (strain LT2 / SGSC1412 / ATCC 700720).